Reading from the N-terminus, the 761-residue chain is Proton-coupled zinc antiporter SLC30A5 (761 aa).

Methionine 1 is modified (N-acetylmethionine). Residues 1-29 (MEEKYGGDARPGPGGGLGPVDVPSARLTR) lie on the Cytoplasmic side of the membrane. A helical membrane pass occupies residues 30-46 (YILLLCLTKCLKAVGLF). Topologically, residues 47–54 (ESYDLLKA) are lumenal. A helical membrane pass occupies residues 55-75 (VHIVQFIFILKLGTAFFMVLF). Residues 76-96 (QKPFSSGKPITKHQWIKIFKH) are Cytoplasmic-facing. The helical transmembrane segment at 97–117 (AVAGCIISLLWFFGLTLCGPL) threads the bilayer. A topological domain (lumenal) is located at residue arginine 118. A helical transmembrane segment spans residues 119–139 (TLLLFEHSDIVVISLLSVLFT). Topologically, residues 140 to 150 (SSGGGPAKTRG) are cytoplasmic. The chain crosses the membrane as a helical span at residues 151–171 (AAFFIIAVICLLLFDNDDLMA). Topologically, residues 172 to 191 (KMAEHPEGHHDSALTHMLYT) are lumenal. Residues 192–212 (AIAFLGVADHKGGVLLLVLAL) traverse the membrane as a helical segment. The Cytoplasmic portion of the chain corresponds to 213-236 (CCKVGFHTASRKLSIDVGGAKRLQ). Residues 237 to 257 (ALSQLVSVFLLCPWVIVLSVT) form a helical membrane-spanning segment. Over 258–264 (TESKVES) the chain is Lumenal. Residues 265–285 (WFSLIMPFTTVIFFVMILDFY) traverse the membrane as a helical segment. At 286–301 (MDSVCSVKMDVSKCAR) the chain is on the cytoplasmic side. The chain crosses the membrane as a helical span at residues 302 to 322 (YGSFPIFISALLFGNFWTHPI). Residues 323–340 (TDQLRAMNRAAHQESTEH) are Lumenal-facing. A helical transmembrane segment spans residues 341–361 (VLSGGVVVSAVFFILSANILS). Over 362–416 (SPSKRGQKGTLIGYSPEGTPLYHFMGDAFQHSSQSVPRFIKDSLKQVLEESDSRQ) the chain is Cytoplasmic. The chain crosses the membrane as a helical span at residues 417-437 (IFYFLCLNLLFTFVELFYGVL). The tract at residues 418 to 636 (FYFLCLNLLF…VLIFLSVIPL (219 aa)) is mediates homodimerization with SLC30A6. The Lumenal segment spans residues 438–446 (TNSLGLISD). Residues 447 to 467 (GFHMLFDCSALVMGLFAALMS) form a helical membrane-spanning segment. Residues histidine 449 and aspartate 453 each coordinate Zn(2+). Topologically, residues 468-481 (RWKATRIFSYGYGR) are cytoplasmic. Residues 482-502 (IEILSGFINGLFLIVIAFFVF) form a helical membrane-spanning segment. The Lumenal segment spans residues 503–518 (MESVARLIDPPELDTN). Residues 519 to 539 (MLTPVSVGGLIVNLIGICAFS) traverse the membrane as a helical segment. The his-rich loop; required for zinc transport stretch occupies residues 540–574 (HAHSHGHGASQGNCHSDHGHSHHAHGHGHDHGHSH). Residues 540–588 (HAHSHGHGASQGNCHSDHGHSHHAHGHGHDHGHSHGFTGGGMNANMRGV) are Cytoplasmic-facing. The tract at residues 549-576 (SQGNCHSDHGHSHHAHGHGHDHGHSHGF) is disordered. A helical membrane pass occupies residues 589 to 609 (FLHVLADTLGSIGVIVSTVLI). The Zn(2+) site is built by histidine 591 and aspartate 595. The Lumenal portion of the chain corresponds to 610–613 (EQFG). Residues 614-634 (WFIADPLCSLFIAVLIFLSVI) form a helical membrane-spanning segment. At 635 to 761 (PLIKDACQVL…KYCKDGTYIM (127 aa)) the chain is on the cytoplasmic side.

Belongs to the cation diffusion facilitator (CDF) transporter (TC 2.A.4) family. SLC30A subfamily. Heterodimer with SLC30A6/ZNT6; form a functional zinc ion transmembrane transporter. In terms of processing, could homodimerize through the formation of dityrosine bonds upon oxidative stress. As to expression, ubiquitously expressed.

Its subcellular location is the golgi apparatus. The protein localises to the golgi stack membrane. The protein resides in the cytoplasmic vesicle. It is found in the COPII-coated vesicle membrane. It localises to the secretory vesicle membrane. Its subcellular location is the trans-Golgi network membrane. It carries out the reaction Zn(2+)(in) + 2 H(+)(out) = Zn(2+)(out) + 2 H(+)(in). Together with SLC30A6 forms a functional proton-coupled zinc ion antiporter mediating zinc entry into the lumen of organelles along the secretory pathway. By contributing to zinc ion homeostasis within the early secretory pathway, regulates the activation and folding of enzymes like alkaline phosphatases and enzymes involved in phosphatidylinositol glycan anchor biosynthesis. Through the transport of zinc into secretory granules of pancreatic beta-cells, plays an important role in the storage and secretion of insulin. This Mus musculus (Mouse) protein is Proton-coupled zinc antiporter SLC30A5.